Here is a 308-residue protein sequence, read N- to C-terminus: Acetaldehyde dehydrogenase 2 (308 aa).

An NAD(+)-binding site is contributed by 9–12 (SGNI). Cysteine 127 acts as the Acyl-thioester intermediate in catalysis. NAD(+) contacts are provided by residues 158–166 (SAGPGTRAN) and asparagine 286.

This sequence belongs to the acetaldehyde dehydrogenase family.

The catalysed reaction is acetaldehyde + NAD(+) + CoA = acetyl-CoA + NADH + H(+). The polypeptide is Acetaldehyde dehydrogenase 2 (Parafrankia sp. (strain EAN1pec)).